We begin with the raw amino-acid sequence, 562 residues long: MDDNKRPLYLPFAGPAILEAPLINKGSAFTEEERIFFNLEGLLPHVIETIEEQASRAYDQYKNFSNDLDKHIYLRNIQDTNETLYYRLVQNHITEMMPIIYTPTVGMACERFSKDYRRNRGLFISYANKDRIDDILNNSTRQKVKIIVVTDGERILGLGDQGIGGMGIPIGKLSLYTSCGGISPAYTLPVTLDVGTDNPHLLEDPMYMGMRSPRIGGEEYKEFVEAFMQAVNRRWPDALIQFEDFAQKNAMPLLERYKDQYCCFNDDIQGTAAVTVGSLLAACKAAKSKLSEQRITFLGAGSAGCGIAEAIVAQMVSEGISEAQARKQVFMVDRWGMLQSNMPNLLPFQQKLAQQCDDLTNWDNFSDNISLLDVVNNAKPTVLIGVSGAPGLFTEEIIKAMHSHCPRPIVFPLSNPTSRVEATPKDILHWTQGKALVATGSPFEPVVIDDTTYEIAQCNNSYIFPGIGLGVLASGAKRVSDAMLMASSRALAECSPLAIDGEGSLLPKLEDIHLVSKRIAFAVARVAIEEGHALPTTKELLTYAIEDNFWTAEYRSYKRTAF.

The Proton donor role is filled by tyrosine 101. Arginine 154 contacts NAD(+). The active-site Proton acceptor is lysine 172. Residues glutamate 243, aspartate 244, and aspartate 267 each contribute to the a divalent metal cation site. Aspartate 267 and asparagine 415 together coordinate NAD(+).

The protein belongs to the malic enzymes family. Homotetramer. Mg(2+) serves as cofactor. The cofactor is Mn(2+).

The enzyme catalyses (S)-malate + NAD(+) = pyruvate + CO2 + NADH. It catalyses the reaction oxaloacetate + H(+) = pyruvate + CO2. The protein is NAD-dependent malic enzyme of Shewanella halifaxensis (strain HAW-EB4).